The following is a 668-amino-acid chain: SH2 domain-containing protein B (668 aa).

Residues 373–411 (SVSGSEESYQQCNSHPQTSRQFENGNGMRLHEEDNSSID) are disordered. Positions 374 to 396 (VSGSEESYQQCNSHPQTSRQFEN) are enriched in polar residues. Positions 574–642 (WIEGFITKEE…DNICESSERY (69 aa)) constitute an SH2 domain.

Phosphorylated on tyrosine residues. As to expression, expressed in roots, leaves, stems and flowers.

This chain is SH2 domain-containing protein B, found in Arabidopsis thaliana (Mouse-ear cress).